The primary structure comprises 780 residues: Cullin-1 (780 aa).

The Cullin neddylation domain occupies Asp710 to Gly771. A Glycyl lysine isopeptide (Lys-Gly) (interchain with G-Cter in NEDD8) cross-link involves residue Lys724.

Belongs to the cullin family. In terms of assembly, component of an SCF (SKP1-CUL1-F-box protein) E3 ubiquitin ligase complex composed of cul-1, fsn-1, rpm-1 and skr-1. Interacts with Skp1-related proteins skr-1, skr-2, skr-3, skr-4, skr-7, skr-8, skr-9 and skr-10. Neddylated; which enhances the ubiquitination activity of SCF. As to expression, ubiquitous.

The protein resides in the cytoplasm. The protein operates within protein modification; protein ubiquitination. Its function is as follows. Probable core component of multiple cullin-RING-based SCF (SKP1-CUL1-F-box) E3 ubiquitin-protein ligase complexes which mediate the ubiquitination and subsequent proteasomal degradation of target proteins. As a scaffold protein may contribute to catalysis through positioning of the substrate and the ubiquitin-conjugating enzyme. Required for developmentally programmed transitions from the G1 phase of the cell cycle to the G0 phase or the apoptotic pathway. In Caenorhabditis elegans, this protein is Cullin-1 (cul-1).